We begin with the raw amino-acid sequence, 290 residues long: 33 kDa chaperonin (290 aa).

2 cysteine pairs are disulfide-bonded: Cys-231–Cys-233 and Cys-263–Cys-266.

The protein belongs to the HSP33 family. Post-translationally, under oxidizing conditions two disulfide bonds are formed involving the reactive cysteines. Under reducing conditions zinc is bound to the reactive cysteines and the protein is inactive.

The protein resides in the cytoplasm. Redox regulated molecular chaperone. Protects both thermally unfolding and oxidatively damaged proteins from irreversible aggregation. Plays an important role in the bacterial defense system toward oxidative stress. The protein is 33 kDa chaperonin of Thermotoga sp. (strain RQ2).